We begin with the raw amino-acid sequence, 407 residues long: Serine/threonine transporter SstT (407 aa).

9 consecutive transmembrane segments (helical) span residues 12–32, 42–62, 81–101, 141–161, 179–199, 218–238, 245–267, 288–308, and 330–350; these read GNLI…GISS, LGIL…FILI, IIIL…LANF, ALSS…GIAL, VLKI…GLVA, ILLV…IVFF, FPLI…SSAA, ISIP…IAIL, and IIAT…LLLI.

Belongs to the dicarboxylate/amino acid:cation symporter (DAACS) (TC 2.A.23) family.

The protein localises to the cell inner membrane. It catalyses the reaction L-serine(in) + Na(+)(in) = L-serine(out) + Na(+)(out). The enzyme catalyses L-threonine(in) + Na(+)(in) = L-threonine(out) + Na(+)(out). Involved in the import of serine and threonine into the cell, with the concomitant import of sodium (symport system). This Campylobacter jejuni subsp. jejuni serotype O:2 (strain ATCC 700819 / NCTC 11168) protein is Serine/threonine transporter SstT.